The sequence spans 499 residues: Putative DBH-like monooxygenase protein 2 (499 aa).

The N-terminal stretch at 1–16 is a signal peptide; that stretch reads MAHDLLFRLFPLLALG. The region spanning 40-156 is the DOMON domain; the sequence is NVIFLRWDFD…NTVRVLAAYG (117 aa). Tyr209 is an active-site residue. Intrachain disulfides connect Cys211–Cys261 and Cys248–Cys271. Asn236 carries an N-linked (GlcNAc...) asparagine glycan. Cu cation-binding residues include His241 and His242. Asn250 carries an N-linked (GlcNAc...) asparagine glycan. The Cu cation site is built by His308, His389, and His391. Cystine bridges form between Cys365–Cys480 and Cys443–Cys465. Residue His389 is part of the active site. Asn404 carries an N-linked (GlcNAc...) asparagine glycan. A Cu cation-binding site is contributed by Met464. An N-linked (GlcNAc...) asparagine glycan is attached at Asn476.

The protein belongs to the copper type II ascorbate-dependent monooxygenase family. Requires Cu(2+) as cofactor.

This is Putative DBH-like monooxygenase protein 2 (MOXD2P) from Homo sapiens (Human).